The primary structure comprises 399 residues: Tyrosine--tRNA ligase (399 aa).

Positions 44-53 match the 'HIGH' region motif; that stretch reads PTAPDLHLGH. The 'KMSKS' region motif lies at 229-233; that stretch reads KMSKS. K232 is an ATP binding site. Residues 338–398 form the S4 RNA-binding domain; the sequence is ISITKALVDC…GKRKFAKLKV (61 aa).

Belongs to the class-I aminoacyl-tRNA synthetase family. TyrS type 2 subfamily. In terms of assembly, homodimer.

The protein resides in the cytoplasm. The enzyme catalyses tRNA(Tyr) + L-tyrosine + ATP = L-tyrosyl-tRNA(Tyr) + AMP + diphosphate + H(+). Its function is as follows. Catalyzes the attachment of tyrosine to tRNA(Tyr) in a two-step reaction: tyrosine is first activated by ATP to form Tyr-AMP and then transferred to the acceptor end of tRNA(Tyr). This is Tyrosine--tRNA ligase from Sulfurimonas denitrificans (strain ATCC 33889 / DSM 1251) (Thiomicrospira denitrificans (strain ATCC 33889 / DSM 1251)).